The following is a 60-amino-acid chain: MARYRHSRSRSRSRYRRRRRRRSRYRSRRRRXRRRRRSRRGRRRRGYSRRRYSRRRRRRY.

Positions methionine 1 to tyrosine 60 are disordered.

Belongs to the protamine P1 family. As to expression, testis.

It localises to the nucleus. The protein resides in the chromosome. Its function is as follows. Protamines substitute for histones in the chromatin of sperm during the haploid phase of spermatogenesis. They compact sperm DNA into a highly condensed, stable and inactive complex. The sequence is that of Sperm protamine P1 (PRM1) from Petrogale concinna (Nabarlek).